Reading from the N-terminus, the 147-residue chain is Interleukin-4 (147 aa).

A signal peptide spans 1 to 24; that stretch reads MGLSPHLAVTLFCFLICTGNGIHG. Cys47 and Cys87 are joined by a disulfide. N-linked (GlcNAc...) asparagine glycans are attached at residues Asn61, Asn90, and Asn117.

Belongs to the IL-4/IL-13 family.

The protein localises to the secreted. Its function is as follows. Participates in at least several B-cell activation processes as well as of other cell types. It is a costimulator of DNA-synthesis. It induces the expression of class II MHC molecules on resting B-cells. It enhances both secretion and cell surface expression of IgE and IgG1. It also regulates the expression of the low affinity Fc receptor for IgE (CD23) on both lymphocytes and monocytes. Positively regulates IL31RA expression in macrophages. Stimulates autophagy in dendritic cells by interfering with mTORC1 signaling and through the induction of RUFY4. This chain is Interleukin-4 (Il4), found in Rattus norvegicus (Rat).